Reading from the N-terminus, the 366-residue chain is Polyamine aminopropyltransferase 2 (366 aa).

The span at 20–58 (KDKRSELDSDKFELEQQDKHDIQDKQDKQDEQNKQDKQV) shows a compositional bias: basic and acidic residues. The interval 20–61 (KDKRSELDSDKFELEQQDKHDIQDKQDKQDEQNKQDKQVQSE) is disordered. The 232-residue stretch at 74 to 305 (DVWDEISLKE…TDWGFHLATN (232 aa)) folds into the PABS domain. Glutamine 100 contacts S-methyl-5'-thioadenosine. The spermidine site is built by histidine 129 and aspartate 153. S-methyl-5'-thioadenosine contacts are provided by residues aspartate 173 and 207–208 (DA). The Proton acceptor role is filled by aspartate 225.

It belongs to the spermidine/spermine synthase family. As to quaternary structure, homodimer or homotetramer.

The protein resides in the cytoplasm. The enzyme catalyses S-adenosyl 3-(methylsulfanyl)propylamine + putrescine = S-methyl-5'-thioadenosine + spermidine + H(+). Its pathway is amine and polyamine biosynthesis; spermidine biosynthesis; spermidine from putrescine: step 1/1. Catalyzes the irreversible transfer of a propylamine group from the amino donor S-adenosylmethioninamine (decarboxy-AdoMet) to putrescine (1,4-diaminobutane) to yield spermidine. The polypeptide is Polyamine aminopropyltransferase 2 (Bacillus cereus (strain ATCC 14579 / DSM 31 / CCUG 7414 / JCM 2152 / NBRC 15305 / NCIMB 9373 / NCTC 2599 / NRRL B-3711)).